Consider the following 199-residue polypeptide: DnaJ homolog subfamily C member 5B (199 aa).

Phosphoserine occurs at positions 14 and 16. In terms of domain architecture, J spans 19–84 (ALYEILGLQK…SKRNIYDKYG (66 aa)).

Interacts with the chaperone complex consisting of HSC70 and SGTA. In terms of processing, palmitoylated.

The protein resides in the membrane. The polypeptide is DnaJ homolog subfamily C member 5B (DNAJC5B) (Ailuropoda melanoleuca (Giant panda)).